The primary structure comprises 782 residues: Glucocorticoid receptor (782 aa).

The interval 1–20 is disordered; that stretch reads MDPKESLTPPSREEIPSSVL. The segment at 1 to 425 is modulating; sequence MDPKESLTPP…SAATGPPPKL (425 aa). Thr-8 is subject to Phosphothreonine. Arg-24 bears the Omega-N-methylarginine mark. Residue Ser-46 is modified to Phosphoserine. Positions 48 to 79 are disordered; that stretch reads SLAAVSQPDSKQQRLAVDFPKGSGSNAQQPDL. Ser-114, Ser-135, Ser-142, Ser-208, Ser-216, and Ser-231 each carry phosphoserine. Residues 130 to 184 form a disordered region; that stretch reads LSRSTSVPENPKSSASAAGPAAPAEKAFPKTHSDGAPEQPNVKGQTGTNGGNVKL. A compositionally biased stretch (low complexity) spans 140–155; the sequence is PKSSASAAGPAAPAEK. Lys-263 participates in a covalent cross-link: Glycyl lysine isopeptide (Lys-Gly) (interchain with G-Cter in SUMO2). A Phosphoserine modification is found at Ser-272. Residues Lys-282 and Lys-298 each participate in a glycyl lysine isopeptide (Lys-Gly) (interchain with G-Cter in SUMO); alternate cross-link. Residues Lys-282 and Lys-298 each participate in a glycyl lysine isopeptide (Lys-Gly) (interchain with G-Cter in SUMO2); alternate cross-link. A phosphoserine mark is found at Ser-312 and Ser-410. Lys-424 is covalently cross-linked (Glycyl lysine isopeptide (Lys-Gly) (interchain with G-Cter in ubiquitin)). NR C4-type zinc fingers lie at residues 426–446 and 462–486; these read CLVC…CGSC and CAGR…YRKC. Positions 426–491 form a DNA-binding region, nuclear receptor; it reads CLVCSDEASG…RYRKCLQAGM (66 aa). Residues Lys-485, Lys-497, Lys-499, and Lys-500 each carry the N6-acetyllysine modification. The interval 490–782 is interaction with CLOCK; sequence GMNLEARKTK…NIKKLLFHQK (293 aa). The interval 492–528 is hinge; sequence NLEARKTKKKIKGIQQATTGVSQETSENSANKTIVPA. The NR LBD domain occupies 529 to 763; that stretch reads TLPQLTPTLV…FPEMLAEIIT (235 aa). Positions 537 to 702 are interaction with CRY1; the sequence is LVSLLEVIEP…EIRMTYIKEL (166 aa). Lys-708 participates in a covalent cross-link: Glycyl lysine isopeptide (Lys-Gly) (interchain with G-Cter in SUMO).

This sequence belongs to the nuclear hormone receptor family. NR3 subfamily. In terms of assembly, heteromultimeric cytoplasmic complex with HSP90AA1, HSPA1A/HSPA1B, and FKBP5 or another immunophilin such as PPID, STIP1, or the immunophilin homolog PPP5C. Upon ligand binding FKBP5 dissociates from the complex and FKBP4 takes its place, thereby linking the complex to dynein and mediating transport to the nucleus, where the complex dissociates. Probably forms a complex composed of chaperones HSP90 and HSP70, co-chaperones CDC37, PPP5C, TSC1 and client protein TSC2, CDK4, AKT, RAF1 and NR3C1; this complex does not contain co-chaperones STIP1/HOP and PTGES3/p23. Directly interacts with UNC45A. Binds to DNA as a homodimer, and as heterodimer with NR3C2 or the retinoid X receptor. Binds STAT5A and STAT5B homodimers and heterodimers. Interacts with NRIP1, POU2F1, POU2F2 and TRIM28. Interacts with several coactivator complexes, including the SMARCA4 complex, CREBBP/EP300, TADA2L (Ada complex) and p160 coactivators such as NCOA2 and NCOA6. Interaction with BAG1 inhibits transactivation. Interacts with HEXIM1 and TGFB1I1. Interacts with NCOA1. Interacts with NCOA3, SMARCA4, SMARCC1, SMARCD1, and SMARCE1. Interacts with CLOCK, CRY1 and CRY2 in a ligand-dependent fashion. Interacts with CIART. Interacts with RWDD3. Interacts with UBE2I/UBC9 and this interaction is enhanced in the presence of RWDD3. Interacts with GRIP1. Interacts with NR4A3 (via nuclear receptor DNA-binding domain), represses transcription activity of NR4A3 on the POMC promoter Nur response element (NurRE). Directly interacts with PNRC2 to attract and form a complex with UPF1 and DCP1A; the interaction leads to rapid mRNA degradation. Interacts with GSK3B. Interacts with FNIP1 and FNIP2. Interacts (via C-terminus) with HNRNPU (via C-terminus). Interacts with MCM3AP. Interacts (via domain NR LBD) with HSP90AA1 and HSP90AB1. In the absence of hormonal ligand, interacts with TACC1. Interacts (via NR LBD domain) with ZNF764 (via KRAB domain); the interaction regulates transcription factor activity of NR3C1 by directing its actions toward certain biologic pathways. Post-translationally, acetylation by CLOCK reduces its binding to glucocorticoid response elements and its transcriptional activity. In terms of processing, increased proteasome-mediated degradation in response to glucocorticoids. Phosphorylated in the absence of hormone; becomes hyperphosphorylated in the presence of glucocorticoid. The Ser-208, Ser-231 and Ser-410-phosphorylated forms are mainly cytoplasmic, and the Ser-216-phosphorylated form is nuclear. Phosphorylation at Ser-216 increases transcriptional activity. Phosphorylation at Ser-208, Ser-231 and Ser-410 decreases signaling capacity. Phosphorylation at Ser-410 may protect from glucocorticoid-induced apoptosis. Phosphorylation at Ser-208 and Ser-216 is not required in regulation of chromosome segregation. May be dephosphorylated by PPP5C, attenuates NR3C1 action. Post-translationally, ubiquitinated by UBR5, leading to its degradation: UBR5 specifically recognizes and binds ligand-bound NR3C1 when it is not associated with coactivators (NCOAs). In presence of NCOAs, the UBR5-degron is not accessible, preventing its ubiquitination and degradation. In terms of processing, sumoylation at Lys-282 and Lys-298 negatively regulates its transcriptional activity. Sumoylation at Lys-708 positively regulates its transcriptional activity in the presence of RWDD3. Sumoylation at Lys-282 and Lys-298 is dispensable whereas sumoylation at Lys-708 is critical for the stimulatory effect of RWDD3 on its transcriptional activity. Heat shock increases sumoylation in a RWDD3-dependent manner.

The protein localises to the cytoplasm. It is found in the nucleus. The protein resides in the mitochondrion. Its subcellular location is the cytoskeleton. It localises to the spindle. The protein localises to the microtubule organizing center. It is found in the centrosome. The protein resides in the chromosome. Its subcellular location is the nucleoplasm. Receptor for glucocorticoids (GC). Has a dual mode of action: as a transcription factor that binds to glucocorticoid response elements (GRE), both for nuclear and mitochondrial DNA, and as a modulator of other transcription factors. Affects inflammatory responses, cellular proliferation and differentiation in target tissues. Involved in chromatin remodeling. Plays a role in rapid mRNA degradation by binding to the 5' UTR of target mRNAs and interacting with PNRC2 in a ligand-dependent manner which recruits the RNA helicase UPF1 and the mRNA-decapping enzyme DCP1A, leading to RNA decay. Could act as a coactivator for STAT5-dependent transcription upon growth hormone (GH) stimulation and could reveal an essential role of hepatic GR in the control of body growth. Mediates glucocorticoid-induced apoptosis. Promotes accurate chromosome segregation during mitosis. May act as a tumor suppressor. May play a negative role in adipogenesis through the regulation of lipolytic and antilipogenic gene expression. This chain is Glucocorticoid receptor (NR3C1), found in Sus scrofa (Pig).